The primary structure comprises 316 residues: Neuroguidin-B (316 aa).

Disordered regions lie at residues 124–169 and 292–316; these read ENDP…SKVK and VPFM…RRRH. Residues 145-156 show a composition bias toward acidic residues; that stretch reads DERESDSGEEGA. Over residues 296–316 the composition is skewed to basic residues; the sequence is KKSKKGPKKSKKKKGFSRRRH.

It belongs to the SAS10 family. Part of the small subunit (SSU) processome, composed of more than 70 proteins and the RNA chaperone small nucleolar RNA (snoRNA) U3.

The protein resides in the nucleus. It is found in the nucleolus. It localises to the chromosome. The protein localises to the centromere. Its subcellular location is the cytoplasm. The protein resides in the cell projection. It is found in the axon. It localises to the dendrite. The protein localises to the filopodium. In terms of biological role, part of the small subunit (SSU) processome, first precursor of the small eukaryotic ribosomal subunit. During the assembly of the SSU processome in the nucleolus, many ribosome biogenesis factors, an RNA chaperone and ribosomal proteins associate with the nascent pre-rRNA and work in concert to generate RNA folding, modifications, rearrangements and cleavage as well as targeted degradation of pre-ribosomal RNA by the RNA exosome. Its dissociation from the complex determines the transition from state pre-A1 to state pre-A1*. May inhibit mRNA translation. In Xenopus laevis (African clawed frog), this protein is Neuroguidin-B (ngdn-b).